The following is a 501-amino-acid chain: ATP synthase subunit alpha (501 aa).

169–176 (GDRQTGKT) provides a ligand contact to ATP.

This sequence belongs to the ATPase alpha/beta chains family. As to quaternary structure, F-type ATPases have 2 components, CF(1) - the catalytic core - and CF(0) - the membrane proton channel. CF(1) has five subunits: alpha(3), beta(3), gamma(1), delta(1), epsilon(1). CF(0) has three main subunits: a(1), b(2) and c(9-12). The alpha and beta chains form an alternating ring which encloses part of the gamma chain. CF(1) is attached to CF(0) by a central stalk formed by the gamma and epsilon chains, while a peripheral stalk is formed by the delta and b chains.

The protein localises to the cell membrane. It carries out the reaction ATP + H2O + 4 H(+)(in) = ADP + phosphate + 5 H(+)(out). In terms of biological role, produces ATP from ADP in the presence of a proton gradient across the membrane. The alpha chain is a regulatory subunit. This Streptococcus pneumoniae serotype 2 (strain D39 / NCTC 7466) protein is ATP synthase subunit alpha.